A 600-amino-acid polypeptide reads, in one-letter code: Threonine dehydratase, mitochondrial (600 aa).

Lys144 bears the N6-(pyridoxal phosphate)lysine mark. ACT-like domains lie at 425 to 497 and 519 to 590; these read VFLS…DISD and RLYR…DETN.

It belongs to the serine/threonine dehydratase family. In terms of assembly, homotetramer. Pyridoxal 5'-phosphate is required as a cofactor.

The protein localises to the mitochondrion. It is found in the cytoplasm. It carries out the reaction L-threonine = 2-oxobutanoate + NH4(+). The protein operates within amino-acid biosynthesis; L-isoleucine biosynthesis; 2-oxobutanoate from L-threonine: step 1/1. With respect to regulation, isoleucine allosterically inhibits while valine allosterically activates this enzyme. This Schizosaccharomyces pombe (strain 972 / ATCC 24843) (Fission yeast) protein is Threonine dehydratase, mitochondrial.